We begin with the raw amino-acid sequence, 473 residues long: Ribulose bisphosphate carboxylase large chain (473 aa).

Residues 1–2 (MS) constitute a propeptide that is removed on maturation. Pro3 carries the post-translational modification N-acetylproline. The residue at position 14 (Lys14) is an N6,N6,N6-trimethyllysine. Positions 123 and 173 each coordinate substrate. The active-site Proton acceptor is the Lys175. A substrate-binding site is contributed by Lys177. Mg(2+)-binding residues include Lys201, Asp203, and Glu204. Lys201 carries the post-translational modification N6-carboxylysine. His294 functions as the Proton acceptor in the catalytic mechanism. Residues Arg295, His327, and Ser379 each contribute to the substrate site.

It belongs to the RuBisCO large chain family. Type I subfamily. Heterohexadecamer of 8 large chains and 8 small chains; disulfide-linked. The disulfide link is formed within the large subunit homodimers. Mg(2+) is required as a cofactor. The disulfide bond which can form in the large chain dimeric partners within the hexadecamer appears to be associated with oxidative stress and protein turnover.

The protein localises to the plastid. The protein resides in the chloroplast. It catalyses the reaction 2 (2R)-3-phosphoglycerate + 2 H(+) = D-ribulose 1,5-bisphosphate + CO2 + H2O. The enzyme catalyses D-ribulose 1,5-bisphosphate + O2 = 2-phosphoglycolate + (2R)-3-phosphoglycerate + 2 H(+). Functionally, ruBisCO catalyzes two reactions: the carboxylation of D-ribulose 1,5-bisphosphate, the primary event in carbon dioxide fixation, as well as the oxidative fragmentation of the pentose substrate in the photorespiration process. Both reactions occur simultaneously and in competition at the same active site. This is Ribulose bisphosphate carboxylase large chain from Vigna unguiculata (Cowpea).